Here is a 270-residue protein sequence, read N- to C-terminus: ATP synthase subunit a (270 aa).

A run of 5 helical transmembrane segments spans residues isoleucine 40–valine 60, isoleucine 98–valine 118, aspartate 143–isoleucine 163, leucine 208–tryptophan 228, and alanine 239–valine 259.

This sequence belongs to the ATPase A chain family. In terms of assembly, F-type ATPases have 2 components, CF(1) - the catalytic core - and CF(0) - the membrane proton channel. CF(1) has five subunits: alpha(3), beta(3), gamma(1), delta(1), epsilon(1). CF(0) has three main subunits: a(1), b(2) and c(9-12). The alpha and beta chains form an alternating ring which encloses part of the gamma chain. CF(1) is attached to CF(0) by a central stalk formed by the gamma and epsilon chains, while a peripheral stalk is formed by the delta and b chains.

It is found in the cell inner membrane. Functionally, key component of the proton channel; it plays a direct role in the translocation of protons across the membrane. The protein is ATP synthase subunit a of Vibrio vulnificus (strain CMCP6).